The primary structure comprises 382 residues: Probable cytosolic iron-sulfur protein assembly protein 1 (382 aa).

WD repeat units follow at residues 9-48 (AHHD…KFPR), 55-107 (THTR…DNDE), 138-178 (GHEH…EEFE), 185-224 (EHQQ…DDWG), 231-278 (GHQG…SETN), 303-342 (AHTY…WEIE), and 349-382 (HGVH…NVWE).

Belongs to the WD repeat CIA1 family. As to quaternary structure, interacts with NAR1.

It localises to the cytoplasm. Its subcellular location is the nucleus. Its function is as follows. Essential component of the cytosolic iron-sulfur (Fe/S) protein assembly machinery. Required for the maturation of extramitochondrial Fe/S proteins. In Meyerozyma guilliermondii (strain ATCC 6260 / CBS 566 / DSM 6381 / JCM 1539 / NBRC 10279 / NRRL Y-324) (Yeast), this protein is Probable cytosolic iron-sulfur protein assembly protein 1.